We begin with the raw amino-acid sequence, 781 residues long: ATP-dependent 6-phosphofructokinase (781 aa).

Positions 1-394 are N-terminal catalytic PFK domain 1; it reads MATWMEGKYV…NLATYIKLSK (394 aa). ATP-binding positions include glycine 27, 90-91, and 120-123; these read RC and GDGS. Aspartate 121 lines the Mg(2+) pocket. Residues 166–168, arginine 203, 210–212, glutamate 266, arginine 294, and 300–303 each bind substrate; these read SID, MGR, and HVQR. The active-site Proton acceptor is aspartate 168. Residues 395–409 are interdomain linker; sequence IEQPRQSVMSSENNL. Residues 410–781 are C-terminal regulatory PFK domain 2; that stretch reads RIGIVNVGAP…ESIMAGTDRK (372 aa). Beta-D-fructose 2,6-bisphosphate is bound by residues arginine 479, 537 to 541, arginine 575, 582 to 584, aspartate 638, arginine 664, 670 to 673, and arginine 745; these read TISNN, MGG, and HMQQ.

The protein belongs to the phosphofructokinase type A (PFKA) family. ATP-dependent PFK group I subfamily. Eukaryotic two domain clade 'E' sub-subfamily. Homotetramer. The cofactor is Mg(2+).

It localises to the cytoplasm. The catalysed reaction is beta-D-fructose 6-phosphate + ATP = beta-D-fructose 1,6-bisphosphate + ADP + H(+). Its pathway is carbohydrate degradation; glycolysis; D-glyceraldehyde 3-phosphate and glycerone phosphate from D-glucose: step 3/4. With respect to regulation, allosterically activated by ADP, AMP, or fructose 2,6-bisphosphate, and allosterically inhibited by ATP or citrate. Functionally, catalyzes the phosphorylation of D-fructose 6-phosphate to fructose 1,6-bisphosphate by ATP, the first committing step of glycolysis. This is ATP-dependent 6-phosphofructokinase (PFK) from Schistosoma mansoni (Blood fluke).